We begin with the raw amino-acid sequence, 130 residues long: Small ribosomal subunit protein bS16 (130 aa).

Over residues 98–109 (AAAKQAAKDAAE) the composition is skewed to basic and acidic residues. The segment at 98–130 (AAAKQAAKDAAEAKAAAAAEAEAPAADAEASEG) is disordered. Residues 110–130 (AKAAAAAEAEAPAADAEASEG) show a composition bias toward low complexity.

It belongs to the bacterial ribosomal protein bS16 family.

The protein is Small ribosomal subunit protein bS16 of Synechococcus sp. (strain CC9902).